The following is a 169-amino-acid chain: 3-hydroxyacyl-[acyl-carrier-protein] dehydratase FabZ (169 aa).

The active site involves His-66.

Belongs to the thioester dehydratase family. FabZ subfamily.

The protein resides in the cytoplasm. It catalyses the reaction a (3R)-hydroxyacyl-[ACP] = a (2E)-enoyl-[ACP] + H2O. Its function is as follows. Involved in unsaturated fatty acids biosynthesis. Catalyzes the dehydration of short chain beta-hydroxyacyl-ACPs and long chain saturated and unsaturated beta-hydroxyacyl-ACPs. The polypeptide is 3-hydroxyacyl-[acyl-carrier-protein] dehydratase FabZ (Helicobacter hepaticus (strain ATCC 51449 / 3B1)).